Consider the following 488-residue polypeptide: F-box protein At3g60790 (488 aa).

Residues 1–21 (MTTQSSSSSSSLPSSLSSTPP) are disordered. The 47-residue stretch at 49 to 95 (VDRISMLPDEMLQKILSTLSTKDAVITSTLSKRWVDQWKRIPHLCVD) folds into the F-box domain.

The chain is F-box protein At3g60790 from Arabidopsis thaliana (Mouse-ear cress).